The chain runs to 286 residues: Pyridoxal kinase PdxY (286 aa).

Residues Ser9 and 44–45 (TQ) contribute to the substrate site. ATP-binding positions include Asp111, Ala143, Glu148, Lys181, and 208 to 211 (RPLV). Position 223 (Asp223) interacts with substrate.

It belongs to the pyridoxine kinase family. PdxY subfamily. As to quaternary structure, homodimer. Mg(2+) serves as cofactor.

It carries out the reaction pyridoxal + ATP = pyridoxal 5'-phosphate + ADP + H(+). Its pathway is cofactor metabolism; pyridoxal 5'-phosphate salvage; pyridoxal 5'-phosphate from pyridoxal: step 1/1. Its function is as follows. Pyridoxal kinase involved in the salvage pathway of pyridoxal 5'-phosphate (PLP). Catalyzes the phosphorylation of pyridoxal to PLP. This Salmonella paratyphi A (strain ATCC 9150 / SARB42) protein is Pyridoxal kinase PdxY.